The following is a 609-amino-acid chain: MCGIVGYIGRREALPVLMDGLQRLEYRGYDSAGVALVAGGRTWVEKRKGRLSDLQTVLGNLPSGCRVGIGHTRWATHGRPSDRNAHPHTDTSGRFAVVHNGIIENYAELRAELERQGCVFRSETDTEVIPHLIASCYDGDLVRAVRRAVPRLRGAYAIAVVCQQEPDKIVAVRAASPLVIGLGEGELLLASDIPALLPYTRQVIVMEEGWLAELTPEGVTLTTVAGEPVQPQVMRVDWEPGQAERGGYAHFMLKEIHEQPRALRDTLTGRLDAATGLVTLSEVGLSAAEVRALRKVAMVACGTAAHAGLVGRYLIERLAGIPVEWDLASEYRYREPLVDEHTLFVAVSQSGETADTLAALREARSRGARVLAVTNVVGSTVAREADWVLYTWAGPEIAVASTKAYSTQVVALTLLAIWLGQQNGRIDPAEASALVSGLQHLPDQAGQTLSLEAAVKEAAEALAGHDDVFFIGRNLDYAVALEAQLKLKEISYIHAEAYAAGELKHGPLALITDGVPVVALNTQPDLAEKTISNIQETRARGAFVLGLAQEGDEETARHCDRIFYLPRTHRLLTPALAVIPMQLLAYYAATARGTDVDKPRNLAKSVTVE.

Cys2 serves as the catalytic Nucleophile; for GATase activity. Residues 2 to 217 (CGIVGYIGRR…EGWLAELTPE (216 aa)) form the Glutamine amidotransferase type-2 domain. SIS domains lie at 286–425 (SAAE…QNGR) and 458–599 (AAEA…VDKP). Catalysis depends on Lys604, which acts as the For Fru-6P isomerization activity.

As to quaternary structure, homodimer.

It localises to the cytoplasm. The catalysed reaction is D-fructose 6-phosphate + L-glutamine = D-glucosamine 6-phosphate + L-glutamate. Its function is as follows. Catalyzes the first step in hexosamine metabolism, converting fructose-6P into glucosamine-6P using glutamine as a nitrogen source. The chain is Glutamine--fructose-6-phosphate aminotransferase [isomerizing] from Symbiobacterium thermophilum (strain DSM 24528 / JCM 14929 / IAM 14863 / T).